The primary structure comprises 356 residues: sn-glycerol-3-phosphate import ATP-binding protein UgpC (356 aa).

The ABC transporter domain maps to 4–235 (LKLQAVTKSW…PASRFVASFI (232 aa)). 37–44 (GPSGCGKS) provides a ligand contact to ATP.

This sequence belongs to the ABC transporter superfamily. sn-glycerol-3-phosphate importer (TC 3.A.1.1.3) family. The complex is composed of two ATP-binding proteins (UgpC), two transmembrane proteins (UgpA and UgpE) and a solute-binding protein (UgpB).

It is found in the cell inner membrane. It catalyses the reaction sn-glycerol 3-phosphate(out) + ATP + H2O = sn-glycerol 3-phosphate(in) + ADP + phosphate + H(+). Part of the ABC transporter complex UgpBAEC involved in sn-glycerol-3-phosphate (G3P) import. Responsible for energy coupling to the transport system. This chain is sn-glycerol-3-phosphate import ATP-binding protein UgpC, found in Salmonella typhimurium (strain LT2 / SGSC1412 / ATCC 700720).